We begin with the raw amino-acid sequence, 176 residues long: Translation initiation factor IF-3 (176 aa).

Belongs to the IF-3 family. Monomer.

Its subcellular location is the cytoplasm. Its function is as follows. IF-3 binds to the 30S ribosomal subunit and shifts the equilibrium between 70S ribosomes and their 50S and 30S subunits in favor of the free subunits, thus enhancing the availability of 30S subunits on which protein synthesis initiation begins. This Microcystis aeruginosa (strain NIES-843 / IAM M-2473) protein is Translation initiation factor IF-3.